The sequence spans 552 residues: uncharacterized protein (552 aa).

A DhaL domain is found at 8–200 (KLFADMIIQG…LLCVYEGFLK (193 aa)).

This is an uncharacterized protein from Staphylococcus epidermidis (strain ATCC 12228 / FDA PCI 1200).